The sequence spans 359 residues: Methionine import ATP-binding protein MetN (359 aa).

Residues 1–21 (MSTPASTPAPDGSHQRDHHPG) form a disordered region. Residues 24 to 264 (VEFRGVTKVF…PQTTVAQRFV (241 aa)) form the ABC transporter domain. 61-68 (GYSGAGKS) lines the ATP pocket.

This sequence belongs to the ABC transporter superfamily. Methionine importer (TC 3.A.1.24) family. In terms of assembly, the complex is composed of two ATP-binding proteins (MetN), two transmembrane proteins (MetI) and a solute-binding protein (MetQ).

Its subcellular location is the cell membrane. The enzyme catalyses L-methionine(out) + ATP + H2O = L-methionine(in) + ADP + phosphate + H(+). It carries out the reaction D-methionine(out) + ATP + H2O = D-methionine(in) + ADP + phosphate + H(+). Functionally, part of the ABC transporter complex MetNIQ involved in methionine import. Responsible for energy coupling to the transport system. This is Methionine import ATP-binding protein MetN from Corynebacterium efficiens (strain DSM 44549 / YS-314 / AJ 12310 / JCM 11189 / NBRC 100395).